Here is a 434-residue protein sequence, read N- to C-terminus: Glutamate-1-semialdehyde 2,1-aminomutase (434 aa).

At K265 the chain carries N6-(pyridoxal phosphate)lysine.

Belongs to the class-III pyridoxal-phosphate-dependent aminotransferase family. HemL subfamily. As to quaternary structure, homodimer. Pyridoxal 5'-phosphate serves as cofactor.

The protein resides in the cytoplasm. The enzyme catalyses (S)-4-amino-5-oxopentanoate = 5-aminolevulinate. Its pathway is porphyrin-containing compound metabolism; protoporphyrin-IX biosynthesis; 5-aminolevulinate from L-glutamyl-tRNA(Glu): step 2/2. The chain is Glutamate-1-semialdehyde 2,1-aminomutase from Ruminiclostridium cellulolyticum (strain ATCC 35319 / DSM 5812 / JCM 6584 / H10) (Clostridium cellulolyticum).